A 185-amino-acid polypeptide reads, in one-letter code: Prorelaxin (185 aa).

An N-terminal signal peptide occupies residues 1–24 (MPRLFLFHLLGVCLLLNQFSRAVA). 3 disulfide bridges follow: C35/C172, C47/C185, and C171/C176. A propeptide spans 56 to 157 (SLNQEDAPLK…LRSLGLDTHS (102 aa)) (connecting peptide).

Belongs to the insulin family. Heterodimer of a B chain and an A chain linked by two disulfide bonds.

The protein resides in the secreted. Functionally, relaxin is an ovarian hormone that acts with estrogen to produce dilatation of the birth canal in many mammals. May be involved in remodeling of connective tissues during pregnancy, promoting growth of pubic ligaments and ripening of the cervix. This is Prorelaxin (RLN) from Macaca mulatta (Rhesus macaque).